Reading from the N-terminus, the 465-residue chain is Juvenile hormone epoxide hydrolase 2 (465 aa).

A helical membrane pass occupies residues 7–27 (ILWIAIVIGLGVLYYEITKEF). Asp-224 functions as the Nucleophile in the catalytic mechanism. The active-site Proton donor is Tyr-370. His-427 functions as the Proton acceptor in the catalytic mechanism.

The protein belongs to the peptidase S33 family.

The protein localises to the microsome membrane. Its subcellular location is the endoplasmic reticulum membrane. The catalysed reaction is cis-stilbene oxide + H2O = (1R,2R)-hydrobenzoin. It carries out the reaction 1-(4-methoxyphenyl)-N-methyl-N-[(3-methyloxetan-3-yl)methyl]methanamine + H2O = 2-{[(4-methoxybenzyl)(methyl)amino]methyl}-2-methylpropane-1,3-diol. Catalyzes juvenile hormone hydrolysis. This chain is Juvenile hormone epoxide hydrolase 2, found in Ctenocephalides felis (Cat flea).